Consider the following 203-residue polypeptide: Outer-membrane lipoprotein carrier protein (203 aa).

Positions 1–21 are cleaved as a signal peptide; sequence MKKLAITCALLSGMVVSQVWA.

It belongs to the LolA family. In terms of assembly, monomer.

It localises to the periplasm. Functionally, participates in the translocation of lipoproteins from the inner membrane to the outer membrane. Only forms a complex with a lipoprotein if the residue after the N-terminal Cys is not an aspartate (The Asp acts as a targeting signal to indicate that the lipoprotein should stay in the inner membrane). The sequence is that of Outer-membrane lipoprotein carrier protein from Klebsiella pneumoniae subsp. pneumoniae (strain ATCC 700721 / MGH 78578).